The primary structure comprises 144 residues: Flagellar assembly factor FliW (144 aa).

This sequence belongs to the FliW family. In terms of assembly, monomer. One copy interacts with the each alpha-helical wing of the CsrA homodimer, yielding a FliW-CsrA(2)-FliW complex. Comparison with a CsrA-mRNA structure (2JPP) suggests CsrA cannot bind both mRNA and FliW at the same time. Interacts with flagellin.

The protein localises to the cytoplasm. Acts as an anti-CsrA protein, binds CsrA and prevents it from repressing translation of its target genes, one of which is flagellin. Binds to flagellin and participates in the assembly of the flagellum. Its function is as follows. Allosterically inhibits CsrA binding to mRNA in a non-competitive fashion by preventing CsrA binding to the 5'-UTR. The chain is Flagellar assembly factor FliW from Geobacillus thermodenitrificans (strain NG80-2).